We begin with the raw amino-acid sequence, 597 residues long: Inactive metallocarboxypeptidase ECM14 (597 aa).

Positions 1–21 (MRLFTHGQVLALLAFVNTISA) are cleaved as a signal peptide. A propeptide spanning residues 22–174 (TPSFSTNSYP…QTIYESYPSP (153 aa)) is cleaved from the precursor. The span at 170–179 (SYPSPSQSPS) shows a compositional bias: low complexity. The segment at 170–189 (SYPSPSQSPSGRERGFLPSG) is disordered. A Peptidase M14 domain is found at 202 to 522 (NYQPLSVIVP…NAVMMLGRFL (321 aa)). Positions 264 and 267 each coordinate Zn(2+). Substrate-binding positions include 264-267 (HARE), R322, and 339-340 (DR). A disulfide bridge links C333 with C356. A glycan (N-linked (GlcNAc...) asparagine) is linked at N349. H396 contacts Zn(2+). 397–398 (SY) contacts substrate. The tract at residues 543-597 (KDDKPILNDDDDDDADTNDDGIGRKDDSWIPDEYKGDNDRDESDGGWAFRRLRKR) is disordered. Acidic residues predominate over residues 550–561 (NDDDDDDADTND). Over residues 563–580 (GIGRKDDSWIPDEYKGDN) the composition is skewed to basic and acidic residues.

This sequence belongs to the peptidase M14 family. Requires Zn(2+) as cofactor.

The protein localises to the vacuole. Its subcellular location is the secreted. Functionally, inactive carboxypeptidase that may play a role in cell wall organization and biogenesis. This is Inactive metallocarboxypeptidase ECM14 (ECM14) from Ajellomyces capsulatus (strain G186AR / H82 / ATCC MYA-2454 / RMSCC 2432) (Darling's disease fungus).